A 202-amino-acid polypeptide reads, in one-letter code: CASP-like protein 2U7 (202 aa).

Over 1-10 (MLELYEKRRA) the chain is Cytoplasmic. A helical membrane pass occupies residues 11-31 (LLLLRLAAMFLSLAALLITVL). The Extracellular segment spans residues 32–64 (NREDGFFSINVFGSPQPILTKATADFTLVKGLK). A helical membrane pass occupies residues 65–85 (FFAGAMGIVAGYSFLQLAIAM). The Cytoplasmic segment spans residues 86–101 (ASMFSGAPSILGGKRM). Residues 102–122 (AWLCFVGDMTASHLCAAAAAV) form a helical membrane-spanning segment. The Extracellular portion of the chain corresponds to 123-148 (SAQLAYLGKRGAPMWSAVCTYFSHYC). Residues 149-169 (LVFGLAVIFAFLATLAALLVA) traverse the membrane as a helical segment. Over 170-202 (SISSYHLFRLHGILQQQQQQRRQLQQEHVQDKP) the chain is Cytoplasmic.

This sequence belongs to the Casparian strip membrane proteins (CASP) family. Homodimer and heterodimers.

The protein resides in the cell membrane. The sequence is that of CASP-like protein 2U7 from Selaginella moellendorffii (Spikemoss).